Consider the following 1121-residue polypeptide: Piwi-like protein ergo-1 (1121 aa).

The segment covering 1-14 (MSYNNGGGGGGGGY) has biased composition (gly residues). Residues 1–134 (MSYNNGGGGG…GNRGGGGGRV (134 aa)) form a disordered region. Basic and acidic residues-rich tracts occupy residues 15-29 (RNDRDDRYHNNDRQN) and 40-77 (YNDDRRDNRYDDRRGSNNDRGCYDQHDRRGSSNDDRRG). A compositionally biased stretch (polar residues) spans 99-112 (GSNQRNDNYGNNRG). Residues 125-134 (GNRGGGGGRV) show a composition bias toward gly residues. A PAZ domain is found at 426–534 (VMTQILTKMT…MPLELVSYIV (109 aa)). Residues 774–1081 (NVLKYLADNK…AAKRAKETLD (308 aa)) enclose the Piwi domain.

It belongs to the argonaute family. Piwi subfamily. Interacts with rde-12. Interacts with rde-10. As to expression, highly expressed in the germline in hermaphrodites.

Its subcellular location is the cytoplasm. In terms of biological role, argonaute protein required for gene silencing in the endogenous RNA interference (RNAi) pathway. Involved in the 26G RNAi pathway and associates with both unmethylated and methylated 26G small interfering RNAs (26G-siRNAs), which are a class of 26 nucleotide siRNAs that possess a guanine residue at the 5'-end. Associated 26G-siRNAs are methylated by the methyltransferase henn-1, which stabilizes the siRNAs. Association with 26G-siRNAs is required for the biogenesis of secondary 22G-siRNAs (a class of 22 nucleotide siRNAs that possess a triphosphorylated guanine residue at the 5'-end). May be involved in passenger strand cleavage of target 26G-siRNAs. In Caenorhabditis elegans, this protein is Piwi-like protein ergo-1.